Consider the following 1121-residue polypeptide: Ataxin-2 homolog (1121 aa).

Residues 1-10 (MNNNSKRKTR) show a composition bias toward basic residues. Residues 1–53 (MNNNSKRKTRPSGGGGGGGASGGISRYNANDNSLRPANNKSGAAGNSAGAGAG) form a disordered region. Residues 12–22 (SGGGGGGGASG) show a composition bias toward gly residues. The segment covering 27–36 (YNANDNSLRP) has biased composition (polar residues). Residues 37-47 (ANNKSGAAGNS) are compositionally biased toward low complexity. The region spanning 71–146 (FFMHSATALV…VVKIVAKDFD (76 aa)) is the Sm domain. Residues S219 and S232 each carry the phosphoserine modification. 4 disordered regions span residues 270–376 (FAAV…GQGG), 422–458 (GKVMRGNVPPNSSGGGNISAVQGGNGNPVGQSKGGYQ), 476–935 (MHGS…TTGT), and 1039–1076 (QTPQSTTPSPGQPHQPFHPPPQPSPAGGGPQPAYTPPT). Residues 274 to 310 (ERPEQDHRRDGDRERERNDRDREREERDRDRDRDRGN) are compositionally biased toward basic and acidic residues. The segment covering 323 to 347 (ETMSSDRYITKQTRGPQMSHVSMSS) has biased composition (polar residues). Gly residues-rich tracts occupy residues 367-376 (ISGGGAGQGG) and 434-448 (SGGGNISAVQGGNGN). Polar residues-rich tracts occupy residues 476–487 (MHGSSQYRNPSH) and 499–524 (ANANTNKPLPQRQIRQYQGSQSNSLN). Composition is skewed to low complexity over residues 552–596 (PPLQ…PQRQ), 623–684 (PPQQ…MQHQ), 697–711 (QPHYVPQPQQQQPQP), and 720–773 (QQQQ…APEP). Over residues 774–789 (SQQPLPLYHPMPPPQT) the composition is skewed to pro residues. Composition is skewed to low complexity over residues 807-825 (ILTAQQPPQQQQLAATPKP) and 835-890 (TTTP…STPV). Composition is skewed to pro residues over residues 914–926 (PSRPHTPQTPVPM) and 1048–1062 (PGQPHQPFHPPPQPS).

The protein belongs to the ataxin-2 family.

It is found in the cytoplasm. In terms of biological role, regulator of actin filament formation, though it does not directly assemble with actin filaments. Required for oocyte specification and oocyte positioning in the female germline. Also required for normal eye development and bristle morphology. In Drosophila pseudoobscura pseudoobscura (Fruit fly), this protein is Ataxin-2 homolog.